The sequence spans 436 residues: UBX domain-containing protein 7 (436 aa).

A Glycyl lysine isopeptide (Lys-Gly) (interchain with G-Cter in ubiquitin) cross-link involves residue Lys-19. The tract at residues 115–141 (AGESSSRETNPGLAREEKSSRDVHRKN) is disordered. Residues 212 to 290 (LHSSKCVLQI…ELTPRSALLL (79 aa)) form the UBX domain. Over residues 325–346 (DKDPEVTSQREETSKPNRHEVR) the composition is skewed to basic and acidic residues. Disordered stretches follow at residues 325–357 (DKDPEVTSQREETSKPNRHEVRSSTPLSGAASS) and 371–436 (SSAH…EDKK). Over residues 347 to 357 (SSTPLSGAASS) the composition is skewed to low complexity. Polar residues predominate over residues 371–408 (SSAHASPMLTPSGTRYPSETNLTTSRSVSPNVFQFVNN). Position 388 is a phosphoserine (Ser-388). Residues 426 to 436 (HLEKKKDEDKK) are compositionally biased toward basic and acidic residues.

As to quaternary structure, interacts with CDC48.

It localises to the endoplasmic reticulum. Involved in CDC48-dependent protein degradation through the ubiquitin/proteasome pathway. This chain is UBX domain-containing protein 7 (UBX7), found in Saccharomyces cerevisiae (strain ATCC 204508 / S288c) (Baker's yeast).